A 273-amino-acid polypeptide reads, in one-letter code: Large ribosomal subunit protein uL2 (273 aa).

The disordered stretch occupies residues arginine 221–arginine 262. A compositionally biased stretch (basic residues) spans lysine 253–arginine 262.

It belongs to the universal ribosomal protein uL2 family. As to quaternary structure, part of the 50S ribosomal subunit. Forms a bridge to the 30S subunit in the 70S ribosome.

In terms of biological role, one of the primary rRNA binding proteins. Required for association of the 30S and 50S subunits to form the 70S ribosome, for tRNA binding and peptide bond formation. It has been suggested to have peptidyltransferase activity; this is somewhat controversial. Makes several contacts with the 16S rRNA in the 70S ribosome. In Haemophilus ducreyi (strain 35000HP / ATCC 700724), this protein is Large ribosomal subunit protein uL2.